The sequence spans 426 residues: Enolase (426 aa).

(2R)-2-phosphoglycerate is bound at residue Gln-162. Residue Glu-204 is the Proton donor of the active site. Residues Asp-241, Glu-284, and Asp-311 each coordinate Mg(2+). 4 residues coordinate (2R)-2-phosphoglycerate: Lys-336, Arg-365, Ser-366, and Lys-387. Catalysis depends on Lys-336, which acts as the Proton acceptor.

It belongs to the enolase family. Component of the RNA degradosome, a multiprotein complex involved in RNA processing and mRNA degradation. Requires Mg(2+) as cofactor.

The protein resides in the cytoplasm. The protein localises to the secreted. Its subcellular location is the cell surface. The enzyme catalyses (2R)-2-phosphoglycerate = phosphoenolpyruvate + H2O. Its pathway is carbohydrate degradation; glycolysis; pyruvate from D-glyceraldehyde 3-phosphate: step 4/5. Functionally, catalyzes the reversible conversion of 2-phosphoglycerate (2-PG) into phosphoenolpyruvate (PEP). It is essential for the degradation of carbohydrates via glycolysis. The chain is Enolase from Hydrogenovibrio crunogenus (strain DSM 25203 / XCL-2) (Thiomicrospira crunogena).